The sequence spans 317 residues: Dehydrogenase/reductase SDR family protein 7-like (317 aa).

Over 1 to 10 (MKNLAERSAG) the chain is Cytoplasmic. Residues 11–31 (SLYWWLLATLFLPIAIPGLVL) traverse the membrane as a helical; Signal-anchor for type II membrane protein segment. At 32–317 (KLLTMMKEQR…KKRAEKLNST (286 aa)) the chain is on the peroxisomal side. Residue 52 to 76 (LITGASSGLGEALAHSFFLAGCKVV) participates in NAD(+) binding. Ser189 contacts substrate. Residue Tyr202 is the Proton acceptor of the active site.

This sequence belongs to the short-chain dehydrogenases/reductases (SDR) family.

It is found in the peroxisome membrane. In terms of biological role, putative oxidoreductase. In Anopheles gambiae (African malaria mosquito), this protein is Dehydrogenase/reductase SDR family protein 7-like.